The following is a 224-amino-acid chain: MINQKKIAGEKACEWIKDGMVVGLGTGSTVYYTIEKLGEMVNNGLHITGVATSEETNKQAQNLGIPLKSLNDVTEIDITIDGADEIDTDFQGIKGGGGALLREKMVASASLKNIWVVSEEKLVRNLGKFPLPLEVIPFGWKQVERKLEKEHIQTNLRKQSSGEVYVTNNGNYILDIVNQTFTDAEMWQEKLAQIPGIVEHGLFLHYVDIIICAKANGEIELIKK.

Residues 26–29 (TGST), 81–84 (DGAD), and 94–97 (KGGG) each bind substrate. Glutamate 103 functions as the Proton acceptor in the catalytic mechanism. Lysine 121 serves as a coordination point for substrate.

It belongs to the ribose 5-phosphate isomerase family. Homodimer.

It catalyses the reaction aldehydo-D-ribose 5-phosphate = D-ribulose 5-phosphate. It functions in the pathway carbohydrate degradation; pentose phosphate pathway; D-ribose 5-phosphate from D-ribulose 5-phosphate (non-oxidative stage): step 1/1. Catalyzes the reversible conversion of ribose-5-phosphate to ribulose 5-phosphate. The protein is Ribose-5-phosphate isomerase A of Listeria monocytogenes serovar 1/2a (strain ATCC BAA-679 / EGD-e).